We begin with the raw amino-acid sequence, 159 residues long: Photosystem I reaction center subunit XI (159 aa).

3 helical membrane passes run 53 to 73 (LEIG…LGPL), 84 to 104 (LISG…YGIV), and 125 to 145 (FTAG…TLLE).

This sequence belongs to the PsaL family.

The protein resides in the cellular thylakoid membrane. The protein is Photosystem I reaction center subunit XI of Cyanothece sp. (strain PCC 7425 / ATCC 29141).